Reading from the N-terminus, the 595-residue chain is Aspartate--tRNA(Asp/Asn) ligase (595 aa).

L-aspartate is bound at residue glutamate 171. Residues 195–198 (QLFK) are aspartate. Arginine 217 is an L-aspartate binding site. ATP-binding positions include 217-219 (RDE) and glutamine 226. Residue histidine 454 participates in L-aspartate binding. An ATP-binding site is contributed by glutamate 488. Arginine 495 is an L-aspartate binding site. 540–543 (GLDR) serves as a coordination point for ATP.

Belongs to the class-II aminoacyl-tRNA synthetase family. Type 1 subfamily. In terms of assembly, homodimer.

Its subcellular location is the cytoplasm. It carries out the reaction tRNA(Asx) + L-aspartate + ATP = L-aspartyl-tRNA(Asx) + AMP + diphosphate. Its function is as follows. Aspartyl-tRNA synthetase with relaxed tRNA specificity since it is able to aspartylate not only its cognate tRNA(Asp) but also tRNA(Asn). Reaction proceeds in two steps: L-aspartate is first activated by ATP to form Asp-AMP and then transferred to the acceptor end of tRNA(Asp/Asn). In Bordetella petrii (strain ATCC BAA-461 / DSM 12804 / CCUG 43448), this protein is Aspartate--tRNA(Asp/Asn) ligase.